Consider the following 303-residue polypeptide: Glycine--tRNA ligase alpha subunit (303 aa).

This sequence belongs to the class-II aminoacyl-tRNA synthetase family. Tetramer of two alpha and two beta subunits.

It localises to the cytoplasm. The enzyme catalyses tRNA(Gly) + glycine + ATP = glycyl-tRNA(Gly) + AMP + diphosphate. This chain is Glycine--tRNA ligase alpha subunit, found in Escherichia fergusonii (strain ATCC 35469 / DSM 13698 / CCUG 18766 / IAM 14443 / JCM 21226 / LMG 7866 / NBRC 102419 / NCTC 12128 / CDC 0568-73).